A 118-amino-acid chain; its full sequence is Large ribosomal subunit protein bL20 (118 aa).

This sequence belongs to the bacterial ribosomal protein bL20 family.

Binds directly to 23S ribosomal RNA and is necessary for the in vitro assembly process of the 50S ribosomal subunit. It is not involved in the protein synthesizing functions of that subunit. In Trichormus variabilis (strain ATCC 29413 / PCC 7937) (Anabaena variabilis), this protein is Large ribosomal subunit protein bL20.